The following is an 87-amino-acid chain: MYVVIVYDVGVERVNKVRSFLREYMNWVQNSVFEGELTKAEFLKIKSRLKELIQESSDHIIFYSSRDRKYLGIEDLGTPKADTSNII.

D8 is a Mg(2+) binding site.

The protein belongs to the CRISPR-associated endoribonuclease Cas2 protein family. Homodimer, forms a heterotetramer with a Cas1 homodimer. The cofactor is Mg(2+).

Its function is as follows. CRISPR (clustered regularly interspaced short palindromic repeat), is an adaptive immune system that provides protection against mobile genetic elements (viruses, transposable elements and conjugative plasmids). CRISPR clusters contain sequences complementary to antecedent mobile elements and target invading nucleic acids. CRISPR clusters are transcribed and processed into CRISPR RNA (crRNA). Functions as a ssRNA-specific endoribonuclease. Involved in the integration of spacer DNA into the CRISPR cassette. The protein is CRISPR-associated endoribonuclease Cas2 of Methanosarcina acetivorans (strain ATCC 35395 / DSM 2834 / JCM 12185 / C2A).